The following is a 297-amino-acid chain: MTRRLLLVHAHPDDETITTGGTIARYLSEGAEVTVVTCTLGEEGEVMDPPYAQLVADQADQLGGYRIAELTRALAALSEPAGPVLRPRFLGGAGRWRDSGMAGTPAADHPRAFASADRIAADGPVALLAGIIRELRPQVVVTYDQVGGYGHPDHIAAHTVTTAAVDAAAASGLPGEQWAVAKLYWTVAGRGQIDRGVAAFAETELPGDWSVPESASLPAHDDAALTALIDTRDVAGRKVAALRAHATQLAVAPCGTAFALTNLIAQPVLTEEAYILVRGTAAPGPDGLERDLFAGLE.

Residues His-11, Asp-14, and His-154 each coordinate Zn(2+).

This sequence belongs to the MshB deacetylase family. Zn(2+) serves as cofactor.

It catalyses the reaction 1D-myo-inositol 2-acetamido-2-deoxy-alpha-D-glucopyranoside + H2O = 1D-myo-inositol 2-amino-2-deoxy-alpha-D-glucopyranoside + acetate. Catalyzes the deacetylation of 1D-myo-inositol 2-acetamido-2-deoxy-alpha-D-glucopyranoside (GlcNAc-Ins) in the mycothiol biosynthesis pathway. The chain is 1D-myo-inositol 2-acetamido-2-deoxy-alpha-D-glucopyranoside deacetylase from Tsukamurella paurometabola (strain ATCC 8368 / DSM 20162 / CCUG 35730 / CIP 100753 / JCM 10117 / KCTC 9821 / NBRC 16120 / NCIMB 702349 / NCTC 13040) (Corynebacterium paurometabolum).